Reading from the N-terminus, the 52-residue chain is Lysis protein for colicin N (52 aa).

The signal sequence occupies residues 1 to 17; that stretch reads MCGKILLILFFIMTLSA. Residue C18 is the site of N-palmitoyl cysteine attachment. A lipid anchor (S-diacylglycerol cysteine) is attached at C18.

The protein localises to the cell outer membrane. Its function is as follows. Lysis proteins are required for both colicin release and partial cell lysis. The chain is Lysis protein for colicin N (cnl) from Escherichia coli.